A 631-amino-acid chain; its full sequence is uncharacterized protein (631 aa).

A compositionally biased stretch (polar residues) spans 1-19 (MSKMGSSSMGELQDGITQE). Residues 1–92 (MSKMGSSSMG…EENYPRLQTT (92 aa)) form a disordered region. Positions 67–76 (KKKKKKKLKK) are enriched in basic residues. One can recognise an Exonuclease domain in the interval 277–426 (LAIDCEMVRT…EDALACVDLL (150 aa)). A compositionally biased stretch (polar residues) spans 517-526 (ANRNTKQENN). The disordered stretch occupies residues 517 to 540 (ANRNTKQENNSDTDTENDSVEEDQ). Residues 527 to 540 (SDTDTENDSVEEDQ) show a composition bias toward acidic residues.

It belongs to the REXO1/REXO3 family.

It is found in the nucleus. This is an uncharacterized protein from Schizosaccharomyces pombe (strain 972 / ATCC 24843) (Fission yeast).